Reading from the N-terminus, the 100-residue chain is Acylphosphatase (100 aa).

Residues 14-100 form the Acylphosphatase-like domain; sequence RWRFFVEGKV…TGADWFEIRS (87 aa). Active-site residues include Arg29 and Asn47.

This sequence belongs to the acylphosphatase family.

It catalyses the reaction an acyl phosphate + H2O = a carboxylate + phosphate + H(+). The chain is Acylphosphatase (acyP) from Synechococcus sp. (strain WH7803).